The following is a 249-amino-acid chain: Thioesterase TesA (249 aa).

Catalysis depends on residues S92, D196, and H224.

It belongs to the thioesterase family.

It catalyses the reaction a fatty acyl-CoA + H2O = a fatty acid + CoA + H(+). Involved in the synthesis of both phthiocerol dimycocerosates (PDIMs) and phenolic glycolipids (PGLs), which are structurally related lipids non-covalently bound to the outer cell wall layer of M.tuberculosis and are important virulence factors. The polypeptide is Thioesterase TesA (Mycobacterium marinum (strain ATCC BAA-535 / M)).